Consider the following 368-residue polypeptide: uncharacterized protein (368 aa).

This is an uncharacterized protein from Archaeoglobus fulgidus (strain ATCC 49558 / DSM 4304 / JCM 9628 / NBRC 100126 / VC-16).